Reading from the N-terminus, the 904-residue chain is MDQDLDGAERGERGGGSEELLQEEINEGRLTAREALQTWINNGEIHPWVLAGMLSMGVGMLLGVYCQLPDTLIWILMFQLCLYWGLGETSRELDKDSWQWVRSVFIIAILGTLTMAGTALADDDQSTLIPNITKIPTKDTEPGCTYPWILILLILAFILGILGIILVLRRSNSEDILAARDTIDWWLSANQEIPPKFAFPIILISSPLAGIIGYYVMERHLEIFKKGCQICGSLSSMWGMLLEEIGRWLARREWNVSRVMVILLISFSWGMYVNRVNASGSHVAMVTSPPGYRIVNDTSQAPWYCFSSAPIPTCSSSQWGDKYFEEKINETLVKQVYEQAAKHSRATWIEPDLLEEAVYELALLSANDSRQVVVENGTDVCSSQNSSTNKGHPMTLLKLRGQVSETWIGNSSLQFCVQWPYVLVGLNNSDSNISFNSGDWIATNCMHPITLNKSAQDLGKNFPRLTFLDGQLSQLKNTLCGHNTNCLKFGNKSFSTNSLILCQDNPIGNDTFYSLSHSFSKQASARWILVKVPSYGFVVVNDTDTPPSLRIRKPRAVGLAIFLLVLAIMAITSSLVAATTLVNQHTTAKVVERVVQNVSYIAQTQDQFTHLFRNINNRLNVLHHRVSYLEYVEEIRQKQVFFGCKPHGRYCHFDFGPEEVGWNNSWNSKTWNDLQDEYDKIEEKILKIRVDWLNSSLSDTQDTFGLETSIFDHLVQLFDWTSWKDWIKIIIVIIVLWLLIKILLGMLRSCAKVSQNYQHLPAEEEDGDTEPESSPARGDPASGSLYENWLNKIGESKNDAYRVWTEEYNSLRILFATCRWDLLTPQLLQLPFFLLTLLLKLLWDIFRHAPILNLKGWTVGQGGTSGQQQPPDFPYVNWTGSREQNNPEGGLDSGAWYEGLRGSQ.

At 1–726 (MDQDLDGAER…LFDWTSWKDW (726 aa)) the chain is on the extracellular side. Residues asparagine 131, asparagine 255, asparagine 277, asparagine 296, asparagine 329, asparagine 367, asparagine 376, asparagine 385, asparagine 410, asparagine 427, asparagine 432, asparagine 452, asparagine 491, asparagine 509, and asparagine 541 are each glycosylated (N-linked (GlcNAc...) asparagine; by host). Residues 556 to 576 (AVGLAIFLLVLAIMAITSSLV) form a fusion peptide region. The stretch at 588 to 638 (AKVVERVVQNVSYIAQTQDQFTHLFRNINNRLNVLHHRVSYLEYVEEIRQK) forms a coiled coil. N-linked (GlcNAc...) asparagine; by host glycosylation is present at asparagine 597. Positions 615 to 631 (INNRLNVLHHRVSYLEY) are immunosuppression. 2 N-linked (GlcNAc...) asparagine; by host glycosylation sites follow: asparagine 663 and asparagine 694. A coiled-coil region spans residues 676–712 (DEYDKIEEKILKIRVDWLNSSLSDTQDTFGLETSIFD). The chain crosses the membrane as a helical span at residues 727–747 (IKIIIVIIVLWLLIKILLGML). Residues 748–904 (RSCAKVSQNY…AWYEGLRGSQ (157 aa)) lie on the Cytoplasmic side of the membrane. 2 disordered regions span residues 761-783 (PAEEEDGDTEPESSPARGDPASG) and 862-904 (GGTS…RGSQ). A compositionally biased stretch (polar residues) spans 878 to 887 (WTGSREQNNP).

As to quaternary structure, the mature envelope protein (Env) consists of a trimer of SU-TM heterodimers attached by non-covalent interactions or by a labile interchain disulfide bond. Specific enzymatic cleavages in vivo yield mature proteins. Envelope glycoproteins are synthesized as an inactive precursor that is N-glycosylated and processed likely by host cell furin or by a furin-like protease in the Golgi to yield the mature SU and TM proteins. The cleavage site between SU and TM requires the minimal sequence [KR]-X-[KR]-R.

It is found in the virion membrane. The protein resides in the host cell membrane. In terms of biological role, the surface protein (SU) attaches the virus to the host cell by binding to its receptor. This interaction triggers the refolding of the transmembrane protein (TM) and is thought to activate its fusogenic potential by unmasking its fusion peptide. Fusion occurs at the host cell plasma membrane. Its function is as follows. The transmembrane protein (TM) acts as a class I viral fusion protein. Under the current model, the protein has at least 3 conformational states: pre-fusion native state, pre-hairpin intermediate state, and post-fusion hairpin state. During viral and target cell membrane fusion, the coiled coil regions (heptad repeats) assume a trimer-of-hairpins structure, positioning the fusion peptide in close proximity to the C-terminal region of the ectodomain. The formation of this structure appears to drive apposition and subsequent fusion of viral and target cell membranes. Membranes fusion leads to delivery of the nucleocapsid into the cytoplasm. The sequence is that of Envelope glycoprotein (env) from Bovine immunodeficiency virus (strain R29) (BIV).